Here is a 167-residue protein sequence, read N- to C-terminus: Heme-degrading monooxygenase (167 aa).

Residues 1–50 (MKKVFITTGTEHYLRQLMANYTGGNVTLLQNFSQSLLYQESTGEKLFQEG) are important for catalysis. One can recognise an ABM domain in the interval 67 to 154 (VVVFEYIHLR…NNTQSGFSHE (88 aa)).

The protein belongs to the antibiotic biosynthesis monooxygenase family. As to quaternary structure, monomer.

It localises to the cytoplasm. Functionally, catalyzes the degradation of heme to biliverdin in the presence of a suitable electron donor such as ascorbate, with the subsequent release of iron. Hardly any CO is released by the heme degradation reaction. Binds heme. Allows bacterial pathogens to use the host heme as an iron source. Release of iron from heme may play a crucial role in the pathogenicity of L.monocytogenes. In Listeria monocytogenes serovar 1/2a (strain ATCC BAA-679 / EGD-e), this protein is Heme-degrading monooxygenase.